Reading from the N-terminus, the 189-residue chain is MISTTIFIISSLAAVTYGRSHLTVPVGSTCTLQGPQQGYVTWWRIYDNGGFARPCDQPGTKFSCNGRDLTIINITSNEQGFYYGTNYKDSLDYNIIVVPATTSAPRKTTFSSSSAKASTIPKTASAMLKLQKIALSNSTAAPKTIPKSTIGIITAVVVGLIIIFLCIMYYACCYRKHEQKGDALLNFDI.

Asparagine 73 and asparagine 137 each carry an N-linked (GlcNAc...) asparagine; by host glycan.

The protein belongs to the adenoviridae E3_20 family.

E3 proteins seem to be dispensable for virus growth in tissue culture cells. They are potentially important for virus growth under special conditions; E3 region may help adenoviruses to evade the immune surveillance of the host. This chain is Early E3 20.5 kDa glycoprotein, found in Homo sapiens (Human).